Reading from the N-terminus, the 98-residue chain is Aspartyl/glutamyl-tRNA(Asn/Gln) amidotransferase subunit C (98 aa).

This sequence belongs to the GatC family. Heterotrimer of A, B and C subunits.

The enzyme catalyses L-glutamyl-tRNA(Gln) + L-glutamine + ATP + H2O = L-glutaminyl-tRNA(Gln) + L-glutamate + ADP + phosphate + H(+). The catalysed reaction is L-aspartyl-tRNA(Asn) + L-glutamine + ATP + H2O = L-asparaginyl-tRNA(Asn) + L-glutamate + ADP + phosphate + 2 H(+). Functionally, allows the formation of correctly charged Asn-tRNA(Asn) or Gln-tRNA(Gln) through the transamidation of misacylated Asp-tRNA(Asn) or Glu-tRNA(Gln) in organisms which lack either or both of asparaginyl-tRNA or glutaminyl-tRNA synthetases. The reaction takes place in the presence of glutamine and ATP through an activated phospho-Asp-tRNA(Asn) or phospho-Glu-tRNA(Gln). The protein is Aspartyl/glutamyl-tRNA(Asn/Gln) amidotransferase subunit C of Paenarthrobacter aurescens (strain TC1).